Consider the following 988-residue polypeptide: Ubiquitin carboxyl-terminal hydrolase 36 (988 aa).

Residues 16-55 (PTLRTDNNGARKQAEHPNNQSHHNHPHPTSNPNELPKPKR) are disordered. Low complexity predominate over residues 31 to 48 (HPNNQSHHNHPHPTSNPN). One can recognise a USP domain in the interval 78–386 (TGMINVGNTC…NAYIMFFELD (309 aa)). Cys-87 (nucleophile) is an active-site residue. His-345 functions as the Proton acceptor in the catalytic mechanism. Disordered regions lie at residues 393-422 (PPANRPNGVRLTNGHSTTPVPAATVSSPSP), 483-782 (ATSA…VTSN), and 868-988 (EQRQ…QQQT). Low complexity-rich tracts occupy residues 408 to 422 (STTPVPAATVSSPSP) and 490 to 509 (NGNKSSSPSSNSSSNHKSIN). A phosphoserine mark is found at Ser-419 and Ser-421. Polar residues predominate over residues 532–544 (TTAQLPSMPNMTE). A phosphothreonine mark is found at Thr-561 and Thr-565. Ser-575 and Ser-577 each carry phosphoserine. Acidic residues predominate over residues 592 to 601 (EGEDFSESDQ). Positions 602-631 (ESGQTNGHSKTNGSLTNGSASSSVHVNNSK) are enriched in polar residues. The segment covering 632–649 (QKTDAIDEIFKSLKKSAD) has biased composition (basic and acidic residues). At Ser-650 the chain carries Phosphoserine. Acidic residues predominate over residues 650–659 (SEEDDDEEEP). Residues 669–679 (PQKQSQSQSKA) are compositionally biased toward low complexity. A compositionally biased stretch (pro residues) spans 680–689 (PPSPKTPPSP). Ser-682 carries the phosphoserine modification. Thr-685 is subject to Phosphothreonine. Ser-688 bears the Phosphoserine mark. A compositionally biased stretch (acidic residues) spans 707-717 (VDAIDDDDDAV). Position 728 is a phosphothreonine (Thr-728). A compositionally biased stretch (polar residues) spans 735–747 (NPFSSSKPSTDSP). The residue at position 746 (Ser-746) is a Phosphoserine. Thr-749 carries the phosphothreonine modification. The span at 762–782 (ALKSHQQPRVGNGYQSNVTSN) shows a compositional bias: polar residues. Low complexity-rich tracts occupy residues 892–903 (SGSAKGNNASNS) and 930–943 (RFHNQNYRQNFQQR).

It belongs to the peptidase C19 family. As to quaternary structure, interacts with atms/PAF1, but not with CycT.

It is found in the nucleus. The protein resides in the nucleolus. The catalysed reaction is Thiol-dependent hydrolysis of ester, thioester, amide, peptide and isopeptide bonds formed by the C-terminal Gly of ubiquitin (a 76-residue protein attached to proteins as an intracellular targeting signal).. Its function is as follows. Required for maintaining multiple types of adult stem cells, including male and female germline, epithelial follicle cell and intestinal stem cells. May function as a transcriptional repressor by continually deubiquiting histone H2B at the promoters of genes critical for cellular differentiation, thereby preventing histone H3 'Lys-4' trimethylation (H3K4). Controls selective autophagy activation by ubiquitinated proteins. This is Ubiquitin carboxyl-terminal hydrolase 36 (Usp36) from Drosophila simulans (Fruit fly).